Here is a 432-residue protein sequence, read N- to C-terminus: Adenylosuccinate synthetase (432 aa).

GTP contacts are provided by residues 12 to 18 (GDEGKGK) and 40 to 42 (GHT). Aspartate 13 (proton acceptor) is an active-site residue. Residues aspartate 13 and glycine 40 each coordinate Mg(2+). IMP-binding positions include 13–16 (DEGK), 38–41 (NAGH), threonine 131, arginine 145, glutamine 226, threonine 241, and arginine 305. Histidine 41 functions as the Proton donor in the catalytic mechanism. 301–307 (ATTGRPR) contacts substrate. Residues arginine 307, 333 to 335 (KLD), and 415 to 417 (STG) each bind GTP.

Belongs to the adenylosuccinate synthetase family. In terms of assembly, homodimer. The cofactor is Mg(2+).

It localises to the cytoplasm. The enzyme catalyses IMP + L-aspartate + GTP = N(6)-(1,2-dicarboxyethyl)-AMP + GDP + phosphate + 2 H(+). It functions in the pathway purine metabolism; AMP biosynthesis via de novo pathway; AMP from IMP: step 1/2. Functionally, plays an important role in the de novo pathway of purine nucleotide biosynthesis. Catalyzes the first committed step in the biosynthesis of AMP from IMP. This Magnetococcus marinus (strain ATCC BAA-1437 / JCM 17883 / MC-1) protein is Adenylosuccinate synthetase.